Here is a 499-residue protein sequence, read N- to C-terminus: Rhamnogalacturonate lyase A (499 aa).

The N-terminal stretch at 1–20 is a signal peptide; the sequence is MLSKTSLLSLLSLAAGVVNA. Intrachain disulfides connect Cys-49–Cys-92 and Cys-183–Cys-192.

The protein belongs to the polysaccharide lyase 4 family.

The protein resides in the secreted. It catalyses the reaction Endotype eliminative cleavage of L-alpha-rhamnopyranosyl-(1-&gt;4)-alpha-D-galactopyranosyluronic acid bonds of rhamnogalacturonan I domains in ramified hairy regions of pectin leaving L-rhamnopyranose at the reducing end and 4-deoxy-4,5-unsaturated D-galactopyranosyluronic acid at the non-reducing end.. Functionally, pectinolytic enzymes consist of four classes of enzymes: pectin lyase, polygalacturonase, pectin methylesterase and rhamnogalacturonase. Degrades the rhamnogalacturonan I (RG-I) backbone of pectin. The sequence is that of Rhamnogalacturonate lyase A (rglA) from Aspergillus niger.